The chain runs to 681 residues: DNA ligase (681 aa).

NAD(+) contacts are provided by residues 45-49 (DFDFD), 94-95 (SL), and E120. The active-site N6-AMP-lysine intermediate is K122. Positions 143, 177, 289, and 313 each coordinate NAD(+). Residues C403, C406, C421, and C426 each coordinate Zn(2+). In terms of domain architecture, BRCT spans 593 to 681 (ADQQPFAGQS…SLKIDFKNLI (89 aa)).

The protein belongs to the NAD-dependent DNA ligase family. LigA subfamily. The cofactor is Mg(2+). Mn(2+) is required as a cofactor.

It carries out the reaction NAD(+) + (deoxyribonucleotide)n-3'-hydroxyl + 5'-phospho-(deoxyribonucleotide)m = (deoxyribonucleotide)n+m + AMP + beta-nicotinamide D-nucleotide.. Functionally, DNA ligase that catalyzes the formation of phosphodiester linkages between 5'-phosphoryl and 3'-hydroxyl groups in double-stranded DNA using NAD as a coenzyme and as the energy source for the reaction. It is essential for DNA replication and repair of damaged DNA. The chain is DNA ligase from Leptospira interrogans serogroup Icterohaemorrhagiae serovar copenhageni (strain Fiocruz L1-130).